A 59-amino-acid polypeptide reads, in one-letter code: Large ribosomal subunit protein uL30 (59 aa).

This sequence belongs to the universal ribosomal protein uL30 family. Part of the 50S ribosomal subunit.

The chain is Large ribosomal subunit protein uL30 from Macrococcus caseolyticus (strain JCSC5402) (Macrococcoides caseolyticum).